Consider the following 285-residue polypeptide: Eukaryotic translation initiation factor 3 subunit F-2 (285 aa).

Residues 11–145 (VLIKPLVLFQ…TRLYCAVEIG (135 aa)) form the MPN domain.

This sequence belongs to the eIF-3 subunit F family. Component of the eukaryotic translation initiation factor 3 (eIF-3) complex. The eIF-3 complex interacts with pix.

Its subcellular location is the cytoplasm. Component of the eukaryotic translation initiation factor 3 (eIF-3) complex, which is involved in protein synthesis of a specialized repertoire of mRNAs and, together with other initiation factors, stimulates binding of mRNA and methionyl-tRNAi to the 40S ribosome. The eIF-3 complex specifically targets and initiates translation of a subset of mRNAs involved in cell proliferation. The protein is Eukaryotic translation initiation factor 3 subunit F-2 of Drosophila erecta (Fruit fly).